Reading from the N-terminus, the 333-residue chain is Fatty acid hydroxylase domain-containing protein 2 (333 aa).

A run of 6 helical transmembrane segments spans residues 29 to 49, 77 to 97, 134 to 154, 168 to 188, 215 to 235, and 237 to 257; these read FILG…TWHL, ILFF…FNGL, TVLF…YPFL, FHWF…LFYY, VISL…PVIV, and PLVM…ALII. In terms of domain architecture, Fatty acid hydroxylase spans 176 to 299; that stretch reads AIFTLIEEVL…LGVLDHLHGT (124 aa).

This sequence belongs to the sterol desaturase family. Down-regulated in primary acute myeloid leukemia (AML) patients.

The protein resides in the cytoplasm. The protein localises to the membrane. Promotes megakaryocyte differentiation by enhancing ERK phosphorylation and up-regulating RUNX1 expression. The polypeptide is Fatty acid hydroxylase domain-containing protein 2 (FAXDC2) (Homo sapiens (Human)).